The primary structure comprises 620 residues: 1-deoxy-D-xylulose-5-phosphate synthase (620 aa).

Thiamine diphosphate-binding positions include His-75 and 116 to 118 (AHS). Asp-147 is a binding site for Mg(2+). Thiamine diphosphate-binding positions include 148-149 (GA), Asn-177, Tyr-284, and Glu-366. Asn-177 is a binding site for Mg(2+).

The protein belongs to the transketolase family. DXPS subfamily. As to quaternary structure, homodimer. The cofactor is Mg(2+). Requires thiamine diphosphate as cofactor.

It catalyses the reaction D-glyceraldehyde 3-phosphate + pyruvate + H(+) = 1-deoxy-D-xylulose 5-phosphate + CO2. Its pathway is metabolic intermediate biosynthesis; 1-deoxy-D-xylulose 5-phosphate biosynthesis; 1-deoxy-D-xylulose 5-phosphate from D-glyceraldehyde 3-phosphate and pyruvate: step 1/1. In terms of biological role, catalyzes the acyloin condensation reaction between C atoms 2 and 3 of pyruvate and glyceraldehyde 3-phosphate to yield 1-deoxy-D-xylulose-5-phosphate (DXP). The polypeptide is 1-deoxy-D-xylulose-5-phosphate synthase (Bordetella pertussis (strain Tohama I / ATCC BAA-589 / NCTC 13251)).